The chain runs to 90 residues: Acylphosphatase (90 aa).

Positions 3 to 90 constitute an Acylphosphatase-like domain; that stretch reads AVTLKATGRV…QNYHDFRITN (88 aa). Active-site residues include arginine 18 and asparagine 36.

Belongs to the acylphosphatase family.

It catalyses the reaction an acyl phosphate + H2O = a carboxylate + phosphate + H(+). This is Acylphosphatase (acyP) from Lactiplantibacillus plantarum (strain ATCC BAA-793 / NCIMB 8826 / WCFS1) (Lactobacillus plantarum).